Reading from the N-terminus, the 597-residue chain is Elongation factor 4 (597 aa).

Residues 2–184 (KHIRNFSIIA…NIVSAIPAPE (183 aa)) enclose the tr-type G domain. Residues 14-19 (DHGKST) and 131-134 (NKID) each bind GTP.

It belongs to the TRAFAC class translation factor GTPase superfamily. Classic translation factor GTPase family. LepA subfamily.

Its subcellular location is the cell inner membrane. The enzyme catalyses GTP + H2O = GDP + phosphate + H(+). Required for accurate and efficient protein synthesis under certain stress conditions. May act as a fidelity factor of the translation reaction, by catalyzing a one-codon backward translocation of tRNAs on improperly translocated ribosomes. Back-translocation proceeds from a post-translocation (POST) complex to a pre-translocation (PRE) complex, thus giving elongation factor G a second chance to translocate the tRNAs correctly. Binds to ribosomes in a GTP-dependent manner. This is Elongation factor 4 from Vibrio campbellii (strain ATCC BAA-1116).